Consider the following 152-residue polypeptide: Cytochrome c-type biogenesis protein CcmE (152 aa).

Over 1 to 8 (MQARRKTR) the chain is Cytoplasmic. A helical; Signal-anchor for type II membrane protein transmembrane segment spans residues 9-29 (LYIVLAVLAGLGLTVSLTLYA). At 30–152 (LSSNIDLFYT…MTPEKTGAQP (123 aa)) the chain is on the periplasmic side. Residues histidine 130 and tyrosine 134 each contribute to the heme site. The segment at 133–152 (NYTPPEVKNAMTPEKTGAQP) is disordered.

Belongs to the CcmE/CycJ family.

Its subcellular location is the cell inner membrane. In terms of biological role, heme chaperone required for the biogenesis of c-type cytochromes. Transiently binds heme delivered by CcmC and transfers the heme to apo-cytochromes in a process facilitated by CcmF and CcmH. The protein is Cytochrome c-type biogenesis protein CcmE of Klebsiella pneumoniae (strain 342).